Here is a 907-residue protein sequence, read N- to C-terminus: Chloride channel protein 2 (907 aa).

The Cytoplasmic segment spans residues 1–93 (MAAATAAAAT…RCHKFLVSRV (93 aa)). The interval 22–40 (QYEQTLMYGRYTQELGAFA) is essential for channel gating by both voltage and cell volume. Thr26 bears the Phosphothreonine mark. Residues 42–55 (EEAARIRLGGPEPW) are modulates channel gating by both voltage and cell volume. 2 consecutive transmembrane segments (helical) span residues 94-127 (GEDWIFLVLLGLLMALVSWAMDYAIAVCLQAQQW) and 136-161 (ILLQYLAWVTYPVVLITFSAGFTQIL). The short motif at 167–171 (GSGIP) is the Selectivity filter part_1 element. The helical intramembrane region spans 170–177 (IPEMKTIL). Transmembrane regions (helical) follow at residues 186 to 204 (LTLKTFVAKVIGLTCALGS) and 211 to 229 (EGPFVHIASMCAALLSKFL). The Selectivity filter part_2 signature appears at 209–213 (GKEGP). Intramembrane regions (helical) lie at residues 245 to 257 (MLAAACAVGVGCC) and 261 to 269 (PIGGVLFSI). 5 consecutive transmembrane segments (helical) span residues 281-301 (YWRGFFAATFSAFIFRVLAVW), 327-355 (LPAFAVIGIASGFGGALFVYLNRKIVQVM), 364-383 (FLMKKRLLFPALVTLLISTL), 435-455 (ANVFLTLVIFILMKFWMSALA), and 463-486 (GAFMPVFVIGAAFGRLVGESMAAW). The short motif at 463 to 467 (GAFMP) is the Selectivity filter part_3 element. The segment at residues 503 to 517 (GGYAVVGAAALAGAV) is an intramembrane region (helical). The note=Loop between two helices intramembrane region spans 518–519 (TH). Positions 520 to 531 (TVSTAVIVFELT) form an intramembrane region, helical. Residues 532-536 (GQIAH) constitute an intramembrane region (note=Loop between two helices). Residues 537 to 554 (ILPVMIAVILANAVAQSL) form a helical membrane-spanning segment. Topologically, residues 555-907 (QPSLYDSIIR…TPSDSDDKCQ (353 aa)) are cytoplasmic. The region spanning 590–648 (MVRDVPHVALSCTFRDLRLALHRTKGRMLALVESPESMILLGSIERSQVVALLGAQLSP) is the CBS 1 domain. A compositionally biased stretch (basic residues) spans 650-660 (RRRQHMQKLRK). Positions 650–720 (RRRQHMQKLR…NATSLQEGTT (71 aa)) are disordered. Residues 664–678 (SPPSDQESPPSSETS) are compositionally biased toward low complexity. Over residues 696–705 (QTHKPLKPAL) the composition is skewed to basic residues. The span at 710-720 (SNATSLQEGTT) shows a compositional bias: polar residues. A Phosphoserine modification is found at Ser767. The CBS 2 domain occupies 799–859 (IDPAPFQLVE…GSVTAQGVKV (61 aa)). Positions 821–822 (LL) match the Basolateral membrane sorting motif. The segment at 865-907 (SFRDSATSSSDTETTEVHALWGPRSRHGLPREGTPSDSDDKCQ) is disordered.

Belongs to the chloride channel (TC 2.A.49) family. ClC-2/CLCN2 subfamily. In terms of assembly, homodimer. Interacts with auxiliary subunit HEPACAM. Phosphorylated. Activated by dephosphorylation. Ubiquitously expressed. Expressed in neurons and glial cells (at protein level).

It localises to the cell membrane. The protein localises to the basolateral cell membrane. It is found in the cell projection. Its subcellular location is the dendritic spine membrane. The protein resides in the axon. It carries out the reaction chloride(in) = chloride(out). The enzyme catalyses thiocyanate(in) = thiocyanate(out). The catalysed reaction is bromide(in) = bromide(out). It catalyses the reaction nitrate(in) = nitrate(out). It carries out the reaction iodide(out) = iodide(in). Common gate kinetics are down-regulated by intracellular ATP. Inhibited by AK-42, a derivative of meclofenamate. Inhibited by Cd(2+). Inhibited by Zn(2+) and PKC activation. Inhibited at acidic pH. CCLN2:HEPACAM channel conductance is up-regulated upon hypo-osmolarity. In terms of biological role, voltage-gated and osmosensitive chloride channel. Forms a homodimeric channel where each subunit has its own ion conduction pathway. Conducts double-barreled currents controlled by two types of gates, two fast glutamate gates that control each subunit independently and a slow common gate that opens and shuts off both subunits simultaneously. Displays inward rectification currents activated upon membrane hyperpolarization and extracellular hypotonicity. Contributes to chloride conductance involved in neuron excitability. In hippocampal neurons, generates a significant part of resting membrane conductance and provides an additional chloride efflux pathway to prevent chloride accumulation in dendrites upon GABA receptor activation. In glia, associates with the auxiliary subunit HEPACAM/GlialCAM at astrocytic processes and myelinated fiber tracts where it may regulate transcellular chloride flux buffering extracellular chloride and potassium concentrations. Regulates aldosterone production in adrenal glands. The opening of CLCN2 channels at hyperpolarized membrane potentials in the glomerulosa causes cell membrane depolarization, activation of voltage-gated calcium channels and increased expression of aldosterone synthase, the rate-limiting enzyme for aldosterone biosynthesis. Contributes to chloride conductance in retinal pigment epithelium involved in phagocytosis of shed photoreceptor outer segments and photoreceptor renewal. Conducts chloride currents at the basolateral membrane of epithelial cells with a role in chloride reabsorption rather than secretion. Permeable to small monovalent anions with chloride &gt; thiocyanate &gt; bromide &gt; nitrate &gt; iodide ion selectivity. The chain is Chloride channel protein 2 (Clcn2) from Rattus norvegicus (Rat).